Here is a 200-residue protein sequence, read N- to C-terminus: Probable nicotinate-nucleotide adenylyltransferase (200 aa).

This sequence belongs to the NadD family.

The enzyme catalyses nicotinate beta-D-ribonucleotide + ATP + H(+) = deamido-NAD(+) + diphosphate. It participates in cofactor biosynthesis; NAD(+) biosynthesis; deamido-NAD(+) from nicotinate D-ribonucleotide: step 1/1. In terms of biological role, catalyzes the reversible adenylation of nicotinate mononucleotide (NaMN) to nicotinic acid adenine dinucleotide (NaAD). In Clostridium acetobutylicum (strain ATCC 824 / DSM 792 / JCM 1419 / IAM 19013 / LMG 5710 / NBRC 13948 / NRRL B-527 / VKM B-1787 / 2291 / W), this protein is Probable nicotinate-nucleotide adenylyltransferase.